We begin with the raw amino-acid sequence, 134 residues long: Seminal plasma protein PDC-109 (134 aa).

A signal peptide spans Met1 to Gly25. The O-linked (GalNAc...) threonine glycan is linked to Thr36. 2 Fibronectin type-II domains span residues Pro44–Gln88 and Arg89–Cys134. 4 cysteine pairs are disulfide-bonded: Cys49–Cys73, Cys63–Cys86, Cys94–Cys119, and Cys108–Cys134.

The protein belongs to the seminal plasma protein family. Homodimer. In terms of processing, O-linked glycan consists of Gal-GalNAc disaccharide which is modified with a sialic acid residue (macro- and/or microheterogeneity account for differences between BSP-A1 and BSP-A2). In terms of tissue distribution, major component of seminal plasma.

Its subcellular location is the secreted. Functionally, could enhance the fertilizing capacity of bull spermatozoa upon interaction with heparin-like glycosaminoglycans present in the female genital tract. Exhibits both simulatory and inhibitory actions on the release of pituitary gonadotropins. The sequence is that of Seminal plasma protein PDC-109 from Bos taurus (Bovine).